The chain runs to 113 residues: Hydrogenase maturation factor HypA (113 aa).

Ni(2+) is bound at residue His2. Positions 73, 76, 89, and 92 each coordinate Zn(2+).

It belongs to the HypA/HybF family.

Involved in the maturation of [NiFe] hydrogenases. Required for nickel insertion into the metal center of the hydrogenase. The sequence is that of Hydrogenase maturation factor HypA from Bradyrhizobium sp. (strain ORS 278).